Here is a 277-residue protein sequence, read N- to C-terminus: Ribosomal RNA small subunit methyltransferase A (277 aa).

Residues asparagine 27, leucine 29, glycine 54, glutamate 75, aspartate 95, and asparagine 118 each coordinate S-adenosyl-L-methionine.

This sequence belongs to the class I-like SAM-binding methyltransferase superfamily. rRNA adenine N(6)-methyltransferase family. RsmA subfamily.

It is found in the cytoplasm. The catalysed reaction is adenosine(1518)/adenosine(1519) in 16S rRNA + 4 S-adenosyl-L-methionine = N(6)-dimethyladenosine(1518)/N(6)-dimethyladenosine(1519) in 16S rRNA + 4 S-adenosyl-L-homocysteine + 4 H(+). In terms of biological role, specifically dimethylates two adjacent adenosines (A1518 and A1519) in the loop of a conserved hairpin near the 3'-end of 16S rRNA in the 30S particle. May play a critical role in biogenesis of 30S subunits. The protein is Ribosomal RNA small subunit methyltransferase A of Chlamydia trachomatis serovar L2 (strain ATCC VR-902B / DSM 19102 / 434/Bu).